Consider the following 575-residue polypeptide: MKNQTFSKALLATALSCALFNVHAASQAPVGAENGMVVTAQHIASKVGVEVLKSGGNAIDAAVAVGYALAVVYPAAGNIGGGGFMTIQLADGRKTFLDFREKAPLAATANMYLDKDGNVIKGASTTGYLAVGVPGTVSGMEYAREKYGTKTRQQLISPAITLADKGFVLEQGDVDMLWTSTKDFEKDRANSGAIFMNKGQPFQPGERLVQKDLARTLRLISAKGTDGFYKGEVADKLVASMKAGGGIITQADLDQYKTRELAPVECDYRGYHVVSAPPPSSGGVVICEIMNILEGYPMKELGYHSAQGVHYTIEAMRHAYVDRNSYLGDPDFVKNPLAHLLDKDYAAKIRAAINPQKAGISQEIKPGVPPHEGSNTTHYSIVDKDGNAVSVTYTLNDWFGAKVMANGTGVLLNDEMDDFTSKVGVPNMYGLIQGEANAIGPGRRPLSSMSPTIVTKDGKTVMVVGTPGGSRIITATLLTMLNMIDYGMNLQEAVDAPRFHQQWMPESTNIEAFALSPDTQKILESWGQKFAGPQPANHIAAILVGAPSLGGKPIGKNRFYGANDPRRNTGLALGY.

Positions 1-24 (MKNQTFSKALLATALSCALFNVHA) are cleaved as a signal peptide. L-glutamate is bound at residue arginine 100. Threonine 376 functions as the Nucleophile in the catalytic mechanism. Residues threonine 394, asparagine 396, glutamate 415, aspartate 418, 447–448 (SS), and 468–469 (GG) contribute to the L-glutamate site.

The protein belongs to the gamma-glutamyltransferase family. As to quaternary structure, this enzyme consists of two polypeptide chains, which are synthesized in precursor form from a single polypeptide. Cleaved by autocatalysis into a large and a small subunit.

Its subcellular location is the periplasm. The enzyme catalyses an N-terminal (5-L-glutamyl)-[peptide] + an alpha-amino acid = 5-L-glutamyl amino acid + an N-terminal L-alpha-aminoacyl-[peptide]. The catalysed reaction is glutathione + H2O = L-cysteinylglycine + L-glutamate. It catalyses the reaction an S-substituted glutathione + H2O = an S-substituted L-cysteinylglycine + L-glutamate. The protein operates within sulfur metabolism; glutathione metabolism. The chain is Glutathione hydrolase proenzyme (ggt) from Pseudomonas sp. (strain A14).